A 347-amino-acid polypeptide reads, in one-letter code: SCA7 domain-containing protein SELMODRAFT_439258 (347 aa).

Residues 1–13 (MCFFLSSLCPVVA) form the signal peptide. The segment at 77–106 (RAEVGGTGPKVGRPRKLSVYNPREMSDGNP) is disordered. The region spanning 134–201 (QHLPFTVDDL…NNSRKSQQAD (68 aa)) is the SCA7 domain.

In Selaginella moellendorffii (Spikemoss), this protein is SCA7 domain-containing protein SELMODRAFT_439258.